A 544-amino-acid chain; its full sequence is Chaperonin GroEL (544 aa).

ATP is bound by residues 30–33, K51, 87–91, G415, and D495; these read TLGP and DGTTT.

Belongs to the chaperonin (HSP60) family. In terms of assembly, forms a cylinder of 14 subunits composed of two heptameric rings stacked back-to-back. Interacts with the co-chaperonin GroES.

It is found in the cytoplasm. It catalyses the reaction ATP + H2O + a folded polypeptide = ADP + phosphate + an unfolded polypeptide.. Its function is as follows. Together with its co-chaperonin GroES, plays an essential role in assisting protein folding. The GroEL-GroES system forms a nano-cage that allows encapsulation of the non-native substrate proteins and provides a physical environment optimized to promote and accelerate protein folding. This Neisseria meningitidis serogroup B (strain ATCC BAA-335 / MC58) protein is Chaperonin GroEL.